The primary structure comprises 430 residues: Adenylosuccinate synthetase (430 aa).

Residues 12-18 (GDEGKGK) and 40-42 (GHT) contribute to the GTP site. Aspartate 13 serves as the catalytic Proton acceptor. 2 residues coordinate Mg(2+): aspartate 13 and glycine 40. IMP-binding positions include 13-16 (DEGK), 38-41 (NAGH), threonine 130, arginine 144, glutamine 224, threonine 239, and arginine 303. Histidine 41 (proton donor) is an active-site residue. 299 to 305 (VVTGRKR) is a substrate binding site. Residues arginine 305, 331–333 (KLD), and 413–415 (STS) each bind GTP.

Belongs to the adenylosuccinate synthetase family. In terms of assembly, homodimer. Mg(2+) serves as cofactor.

It localises to the cytoplasm. The catalysed reaction is IMP + L-aspartate + GTP = N(6)-(1,2-dicarboxyethyl)-AMP + GDP + phosphate + 2 H(+). It functions in the pathway purine metabolism; AMP biosynthesis via de novo pathway; AMP from IMP: step 1/2. Plays an important role in the de novo pathway of purine nucleotide biosynthesis. Catalyzes the first committed step in the biosynthesis of AMP from IMP. This chain is Adenylosuccinate synthetase, found in Methylobacterium nodulans (strain LMG 21967 / CNCM I-2342 / ORS 2060).